A 417-amino-acid chain; its full sequence is WAT1-related protein At3g02690, chloroplastic (417 aa).

A chloroplast-targeting transit peptide spans 1–68 (MEWPWSAIAA…RRINGDSVVR (68 aa)). Residues 67–92 (VRRSTTSNNSTEETESSSSSSSVDCV) are disordered. A compositionally biased stretch (low complexity) spans 68–89 (RRSTTSNNSTEETESSSSSSSV). 10 helical membrane passes run 122–142 (FLEWTVLISPFFFWGTAMVAM), 152–172 (FFVAAFRLIPAGLLLVAFAVY), 183–203 (AWFSIALFALVDATCFQGFLA), 213–233 (LGSVIIDSQPLTVAVLASFLF), 237–257 (IGIVRAGGLLLGVAGLLLLEV), 269–289 (LWGSGEWWMLLAAQSMAIGTV), 301–321 (IMATGWHMVIGGLPLLAISVI), 339–359 (VIALLYTSIFGSAVSYGVYFY), 369–389 (LSSLTFLTPMFASIFGYLYLN), and 392–412 (FSSLQLVGAAVTLVAIYLVNF). 2 EamA domains span residues 133 to 255 (FFWG…LLLL) and 283 to 411 (SMAI…YLVN).

Belongs to the drug/metabolite transporter (DMT) superfamily. Plant drug/metabolite exporter (P-DME) (TC 2.A.7.4) family.

Its subcellular location is the plastid. It localises to the chloroplast membrane. This chain is WAT1-related protein At3g02690, chloroplastic, found in Arabidopsis thaliana (Mouse-ear cress).